The primary structure comprises 327 residues: Interleukin-12 subunit beta (327 aa).

The signal sequence occupies residues 1–22; that stretch reads MHPQQLVVSWFSLVLLASPIVA. Residues 23–106 form the Ig-like C2-type domain; the sequence is IWELEKNVYI…LSRSLLLLHK (84 aa). Cys-50 and Cys-90 are oxidised to a cystine. Asn-223 carries an N-linked (GlcNAc...) asparagine glycan. The Fibronectin type-III domain occupies 238–327; the sequence is PPKNLQLKPL…WSEWASVSCS (90 aa).

Belongs to the IL-12B family. In terms of assembly, heterodimer with IL12A; disulfide-linked. The heterodimer is known as interleukin IL-12. Heterodimer with IL23A; disulfide-linked. The heterodimer is known as interleukin IL-23. Also secreted as a monomer. Interacts with NBR1; this interaction promotes IL-12 secretion.

Cytokine that can act as a growth factor for activated T and NK cells, enhance the lytic activity of NK/lymphokine-activated killer cells, and stimulate the production of IFN-gamma by resting PBMC. In terms of biological role, associates with IL23A to form the IL-23 interleukin, a heterodimeric cytokine which functions in innate and adaptive immunity. IL-23 may constitute with IL-17 an acute response to infection in peripheral tissues. IL-23 binds to a heterodimeric receptor complex composed of IL12RB1 and IL23R, activates the Jak-Stat signaling cascade, stimulates memory rather than naive T-cells and promotes production of pro-inflammatory cytokines. IL-23 induces autoimmune inflammation and thus may be responsible for autoimmune inflammatory diseases and may be important for tumorigenesis. The polypeptide is Interleukin-12 subunit beta (IL12B) (Bubalus bubalis (Domestic water buffalo)).